A 321-amino-acid polypeptide reads, in one-letter code: Glucokinase (321 aa).

8–13 (GDVGGT) is an ATP binding site.

The protein belongs to the bacterial glucokinase family.

Its subcellular location is the cytoplasm. It carries out the reaction D-glucose + ATP = D-glucose 6-phosphate + ADP + H(+). This chain is Glucokinase, found in Klebsiella pneumoniae (strain 342).